Reading from the N-terminus, the 155-residue chain is Protein-export protein SecB (155 aa).

It belongs to the SecB family. As to quaternary structure, homotetramer, a dimer of dimers. One homotetramer interacts with 1 SecA dimer.

It localises to the cytoplasm. Functionally, one of the proteins required for the normal export of preproteins out of the cell cytoplasm. It is a molecular chaperone that binds to a subset of precursor proteins, maintaining them in a translocation-competent state. It also specifically binds to its receptor SecA. The protein is Protein-export protein SecB of Citrobacter koseri (strain ATCC BAA-895 / CDC 4225-83 / SGSC4696).